The sequence spans 565 residues: MRQSIFFMPTLKETPADAVAKSHQVMLRGGYIRQVTAGVYSYLPLGYKVLRKTEKIIEEEMANAGVVEMIMPHMLPASMWEESGRLPKYGPEMFRLKDRHGREMLLGPTHEETFTDVVAKSLKSYKQMPLQLYQIQTKFRDENRPRFGLLRGREFVMLDGYSFAASQEQLDKQFDDEKAAYLKIFKRTGVEVRPVIADSGTMGGKNSIEFQAPAAVGEDTIATNASGTYAANLEMAVSVDTFKQEPEELKAMEKVATPGCDSIDKLAEFLQVPATRIVKSVLYIVDEKKKVLVLIRADKEVNEVKLTHLLDCDSLRVAETSDLEELTGAGKGGVGPVNADWADEIVADKTVKGLYNVVVGAGESDAQFINANLDRDFKADRFADLRVANEGEPDPVDHEPLKFTTSIEVGHIFKLGTYYTETMGAKFLDQNGKSQPVIMGSYGIGVTRLLSAVVEQHATENGVAWPKEIAPFGIHIIQMKMKDEIQSKLAEDLEAKFAKYDVLYDDRNERPGVKFNDADLVGAPIRITVGRDAADGIVEVKRPGDDQAQKLAVADLEDFIANELD.

Belongs to the class-II aminoacyl-tRNA synthetase family. ProS type 1 subfamily. Homodimer.

It is found in the cytoplasm. It catalyses the reaction tRNA(Pro) + L-proline + ATP = L-prolyl-tRNA(Pro) + AMP + diphosphate. Functionally, catalyzes the attachment of proline to tRNA(Pro) in a two-step reaction: proline is first activated by ATP to form Pro-AMP and then transferred to the acceptor end of tRNA(Pro). As ProRS can inadvertently accommodate and process non-cognate amino acids such as alanine and cysteine, to avoid such errors it has two additional distinct editing activities against alanine. One activity is designated as 'pretransfer' editing and involves the tRNA(Pro)-independent hydrolysis of activated Ala-AMP. The other activity is designated 'posttransfer' editing and involves deacylation of mischarged Ala-tRNA(Pro). The misacylated Cys-tRNA(Pro) is not edited by ProRS. The sequence is that of Proline--tRNA ligase from Lactobacillus delbrueckii subsp. bulgaricus (strain ATCC BAA-365 / Lb-18).